The chain runs to 157 residues: uncharacterized protein (157 aa).

Positions 9–154 constitute an N-acetyltransferase domain; sequence LLINYKTLDE…ETNLNAVTNE (146 aa).

This is an uncharacterized protein from Bacillus cereus (strain G9842).